A 130-amino-acid polypeptide reads, in one-letter code: MAKAPTKSTRKRAKRQVADGMAHIHASFNNTIVTITDRQGNALSWATSGGSGFRGSRKSTPFAAQVAAERAGTAAQDYGLKNLEVFVKGPGPGRESAIRALNAAGYKITNITDVTPIPHNGCRPPKKRRV.

Belongs to the universal ribosomal protein uS11 family. In terms of assembly, part of the 30S ribosomal subunit. Interacts with proteins S7 and S18. Binds to IF-3.

Functionally, located on the platform of the 30S subunit, it bridges several disparate RNA helices of the 16S rRNA. Forms part of the Shine-Dalgarno cleft in the 70S ribosome. This chain is Small ribosomal subunit protein uS11, found in Pseudoalteromonas atlantica (strain T6c / ATCC BAA-1087).